The sequence spans 139 residues: Translation initiation factor 2 subunit beta (139 aa).

This sequence belongs to the eIF-2-beta/eIF-5 family. As to quaternary structure, heterotrimer composed of an alpha, a beta and a gamma chain.

In terms of biological role, eIF-2 functions in the early steps of protein synthesis by forming a ternary complex with GTP and initiator tRNA. The protein is Translation initiation factor 2 subunit beta of Sulfurisphaera tokodaii (strain DSM 16993 / JCM 10545 / NBRC 100140 / 7) (Sulfolobus tokodaii).